A 115-amino-acid chain; its full sequence is NADH-ubiquinone oxidoreductase chain 3 (115 aa).

Transmembrane regions (helical) follow at residues 4–24 (LTAL…AFWL), 55–75 (FFLV…LLPL), and 86–106 (VMML…AYEW).

It belongs to the complex I subunit 3 family. As to quaternary structure, core subunit of respiratory chain NADH dehydrogenase (Complex I) which is composed of 45 different subunits. Interacts with TMEM186. Interacts with TMEM242.

The protein resides in the mitochondrion inner membrane. The catalysed reaction is a ubiquinone + NADH + 5 H(+)(in) = a ubiquinol + NAD(+) + 4 H(+)(out). Functionally, core subunit of the mitochondrial membrane respiratory chain NADH dehydrogenase (Complex I) which catalyzes electron transfer from NADH through the respiratory chain, using ubiquinone as an electron acceptor. Essential for the catalytic activity of complex I. In Isthmomys pirrensis (Mount Pirri Isthmus rat), this protein is NADH-ubiquinone oxidoreductase chain 3.